A 239-amino-acid chain; its full sequence is ATP synthase subunit b (239 aa).

Over residues 1 to 22 (MYAQEAQQKPEAQQSAPAAEQP) the composition is skewed to low complexity. Residues 1-64 (MYAQEAQQKP…GEEEAGEHME (64 aa)) form a disordered region. Basic and acidic residues-rich tracts occupy residues 23-33 (KPAEEQAKPEQ) and 45-64 (ELSE…EHME). The helical transmembrane segment at 85–105 (SYWIAMAFNFAIVFALLGWAM) threads the bilayer.

This sequence belongs to the ATPase B chain family. F-type ATPases have 2 components, F(1) - the catalytic core - and F(0) - the membrane proton channel. F(1) has five subunits: alpha(3), beta(3), gamma(1), delta(1), epsilon(1). F(0) has three main subunits: a(1), b(2) and c(10-14). The alpha and beta chains form an alternating ring which encloses part of the gamma chain. F(1) is attached to F(0) by a central stalk formed by the gamma and epsilon chains, while a peripheral stalk is formed by the delta and b chains.

Its subcellular location is the cell inner membrane. Its function is as follows. F(1)F(0) ATP synthase produces ATP from ADP in the presence of a proton or sodium gradient. F-type ATPases consist of two structural domains, F(1) containing the extramembraneous catalytic core and F(0) containing the membrane proton channel, linked together by a central stalk and a peripheral stalk. During catalysis, ATP synthesis in the catalytic domain of F(1) is coupled via a rotary mechanism of the central stalk subunits to proton translocation. In terms of biological role, component of the F(0) channel, it forms part of the peripheral stalk, linking F(1) to F(0). This Koribacter versatilis (strain Ellin345) protein is ATP synthase subunit b.